A 386-amino-acid chain; its full sequence is MERVSITERPDWREKAHEYGFNFHTMYGEPYWCEDAYYKLTLAQVEKLEEVTAELHQMCLKVVEKVIASDELMTKFRIPKHTWSFVRQSWLTHQPSLYSRLDLAWDGTGEPKLLENNADTPTSLYEAAFFQWIWLEDQLNAGNLPEGSDQFNSLQEKLIDRFVELREQYGFQLLHLTCCRDTVEDRGTIQYLQDCATEAEIATEFLYIDDIGLGEKGQFTDLQDQVISNLFKLYPWEFMLREMFSTKLEDAGVRWLEPAWKSIISNKALLPLLWEMFPNHPNLLPAYFAEDDHPQMEKYVVKPIFSREGANVSIIENGKTIEAAEGPYGEEGMIVQQFHPLPKFGDSYMLIGSWLVNDQPAGIGIREDRALITQDMSRFYPHIFVE.

R100–D102 serves as a coordination point for ATP. Residues D102, E115, and N117 each coordinate Mg(2+). ATP is bound by residues K267, K302, G309, Q336, and L371–T373.

The protein belongs to the glutathionylspermidine synthase preATP-grasp family.

Functionally, may be a ligase forming an amide bond. Shows ATPase activity. This is Putative acid--amine ligase YgiC (ygiC) from Escherichia coli O157:H7.